We begin with the raw amino-acid sequence, 166 residues long: Bile acid 7alpha-dehydratase (166 aa).

Homodimer.

It carries out the reaction 7alpha,12alpha-dihydroxy-3-oxochol-4-en-24-oyl-CoA = 12alpha-hydroxy-3-oxochola-4,6-dien-24-oyl-CoA + H2O. It catalyses the reaction 7alpha-hydroxy-3-oxochol-4-en-24-oyl-CoA = 3-oxochol-4,6-dien-24-oyl-CoA + H2O. The catalysed reaction is 7alpha,12alpha-dihydroxy-3-oxochol-4-en-24-oate = 12alpha-hydroxy-3-oxochola-4,6-dien-24-oate + H2O. The enzyme catalyses 7alpha-hydroxy-3-oxochol-4-en-24-oate = 3-oxochola-4,6-dien-24-oate + H2O. It functions in the pathway lipid metabolism; bile acid biosynthesis. In terms of biological role, functions in the bile acid 7alpha-dehydroxylation pathway, which forms secondary bile acids via the 7alpha-dehydroxylation of primary bile acids, and is carried out by intestinal anaerobic bacteria. Catalyzes the dehydration step in this pathway, yielding a 3-oxo-Delta(4,6)-bile acid-CoA intermediate. In vitro, can act on the free bile acids (non CoA-conjugated) 7-alpha,12-alpha-dihydroxy-3-oxochol-4-enoate and 7-alpha-hydroxy-3-oxochol-4-enoate, but not on 7-alpha,12-alpha-dihydroxy-3-oxo-5-beta-cholanate, 3-alpha,7-alpha,12-alpha-trihydroxy-5-beta-cholanate or 7-beta-hydroxy-3-oxochol-4-enoate. In Clostridium scindens (strain JCM 10418 / VPI 12708), this protein is Bile acid 7alpha-dehydratase.